Here is a 142-residue protein sequence, read N- to C-terminus: Putative pre-16S rRNA nuclease (142 aa).

Belongs to the YqgF nuclease family.

It localises to the cytoplasm. In terms of biological role, could be a nuclease involved in processing of the 5'-end of pre-16S rRNA. This chain is Putative pre-16S rRNA nuclease, found in Staphylococcus carnosus (strain TM300).